A 293-amino-acid polypeptide reads, in one-letter code: Histamine N-methyltransferase (293 aa).

E28 contributes to the substrate binding site. The S-adenosyl-L-methionine site is built by G60, E89, Q94, S120, and I142. N283 contacts substrate.

The protein belongs to the class I-like SAM-binding methyltransferase superfamily. HNMT family. In terms of assembly, monomer.

It localises to the cytoplasm. The enzyme catalyses histamine + S-adenosyl-L-methionine = N(tau)-methylhistamine + S-adenosyl-L-homocysteine + H(+). Its function is as follows. Inactivates histamine by N-methylation. Plays an important role in degrading histamine and in regulating the airway response to histamine. The polypeptide is Histamine N-methyltransferase (hnmt) (Xenopus tropicalis (Western clawed frog)).